Reading from the N-terminus, the 565-residue chain is Sulfite reductase [NADPH] hemoprotein beta-component (565 aa).

C429, C435, C474, and C478 together coordinate [4Fe-4S] cluster. Siroheme is bound at residue C478.

The protein belongs to the nitrite and sulfite reductase 4Fe-4S domain family. Alpha(8)-beta(8). The alpha component is a flavoprotein, the beta component is a hemoprotein. It depends on siroheme as a cofactor. The cofactor is [4Fe-4S] cluster.

The catalysed reaction is hydrogen sulfide + 3 NADP(+) + 3 H2O = sulfite + 3 NADPH + 4 H(+). It functions in the pathway sulfur metabolism; hydrogen sulfide biosynthesis; hydrogen sulfide from sulfite (NADPH route): step 1/1. In terms of biological role, component of the sulfite reductase complex that catalyzes the 6-electron reduction of sulfite to sulfide. This is one of several activities required for the biosynthesis of L-cysteine from sulfate. The polypeptide is Sulfite reductase [NADPH] hemoprotein beta-component (Pseudoalteromonas translucida (strain TAC 125)).